The sequence spans 164 residues: Ribosome-binding factor A (164 aa).

It belongs to the RbfA family. As to quaternary structure, monomer. Binds 30S ribosomal subunits, but not 50S ribosomal subunits or 70S ribosomes.

Its subcellular location is the cytoplasm. In terms of biological role, one of several proteins that assist in the late maturation steps of the functional core of the 30S ribosomal subunit. Associates with free 30S ribosomal subunits (but not with 30S subunits that are part of 70S ribosomes or polysomes). Required for efficient processing of 16S rRNA. May interact with the 5'-terminal helix region of 16S rRNA. This is Ribosome-binding factor A from Caulobacter sp. (strain K31).